The following is a 163-amino-acid chain: 3-hydroxyacyl-[acyl-carrier-protein] dehydratase FabZ (163 aa).

Residue His58 is part of the active site.

It belongs to the thioester dehydratase family. FabZ subfamily.

The protein localises to the cytoplasm. It carries out the reaction a (3R)-hydroxyacyl-[ACP] = a (2E)-enoyl-[ACP] + H2O. Functionally, involved in unsaturated fatty acids biosynthesis. Catalyzes the dehydration of short chain beta-hydroxyacyl-ACPs and long chain saturated and unsaturated beta-hydroxyacyl-ACPs. In Francisella philomiragia subsp. philomiragia (strain ATCC 25017 / CCUG 19701 / FSC 153 / O#319-036), this protein is 3-hydroxyacyl-[acyl-carrier-protein] dehydratase FabZ.